The primary structure comprises 423 residues: Protein IQ-DOMAIN 16 (423 aa).

2 consecutive IQ domains span residues 99–127 and 128–150; these read RHWA…GIVK and LQAL…CIKA. Residues 231 to 251 adopt a coiled-coil conformation; it reads QKKLEIAIKREKAQALALSNQ. The calmodulin-binding stretch occupies residues 235 to 252; that stretch reads EIAIKREKAQALALSNQI.

Belongs to the IQD family. As to quaternary structure, binds to multiple calmodulin (CaM) in the presence of Ca(2+) and CaM-like proteins.

The protein localises to the cytoplasm. It localises to the cytoskeleton. The protein resides in the cell membrane. Functionally, may be involved in cooperative interactions with calmodulins or calmodulin-like proteins. Recruits calmodulin proteins to microtubules, thus being a potential scaffold in cellular signaling and trafficking. Regulates cell shape and elongation in aerial organs (i.e. cotyledons, leaves, and hypocotyls) probably by regulating cortical microtubules (MT) arrays orientation. May associate with nucleic acids and regulate gene expression at the transcriptional or post-transcriptional level. This Arabidopsis thaliana (Mouse-ear cress) protein is Protein IQ-DOMAIN 16.